The primary structure comprises 680 residues: Methionine--tRNA ligase (680 aa).

The short motif at 15–25 is the 'HIGH' region element; it reads PYANGPVHIGH. The Zn(2+) site is built by C147, C150, C160, and C163. Positions 332-336 match the 'KMSKS' region motif; sequence KISTS. ATP is bound at residue T335. The tRNA-binding domain maps to 578–680; the sequence is EFEKLDIRVG…REVKPGSEVK (103 aa).

Belongs to the class-I aminoacyl-tRNA synthetase family. MetG type 1 subfamily. In terms of assembly, homodimer. Requires Zn(2+) as cofactor.

It localises to the cytoplasm. The catalysed reaction is tRNA(Met) + L-methionine + ATP = L-methionyl-tRNA(Met) + AMP + diphosphate. Is required not only for elongation of protein synthesis but also for the initiation of all mRNA translation through initiator tRNA(fMet) aminoacylation. The chain is Methionine--tRNA ligase from Phocaeicola vulgatus (strain ATCC 8482 / DSM 1447 / JCM 5826 / CCUG 4940 / NBRC 14291 / NCTC 11154) (Bacteroides vulgatus).